Reading from the N-terminus, the 555-residue chain is Formate--tetrahydrofolate ligase (555 aa).

Belongs to the formate--tetrahydrofolate ligase family.

It carries out the reaction (6S)-5,6,7,8-tetrahydrofolate + formate + ATP = (6R)-10-formyltetrahydrofolate + ADP + phosphate. Its pathway is one-carbon metabolism; tetrahydrofolate interconversion. This is Formate--tetrahydrofolate ligase from Porphyromonas gingivalis (strain ATCC BAA-308 / W83).